A 404-amino-acid polypeptide reads, in one-letter code: Probable tRNA sulfurtransferase (404 aa).

The 106-residue stretch at 61 to 166 (EAVSERLKDV…SGYSYIMCDE (106 aa)) folds into the THUMP domain. Residues 184–185 (LL), 209–210 (HF), R266, G288, and Q297 each bind ATP.

The protein belongs to the ThiI family.

The protein resides in the cytoplasm. It carries out the reaction [ThiI sulfur-carrier protein]-S-sulfanyl-L-cysteine + a uridine in tRNA + 2 reduced [2Fe-2S]-[ferredoxin] + ATP + H(+) = [ThiI sulfur-carrier protein]-L-cysteine + a 4-thiouridine in tRNA + 2 oxidized [2Fe-2S]-[ferredoxin] + AMP + diphosphate. The enzyme catalyses [ThiS sulfur-carrier protein]-C-terminal Gly-Gly-AMP + S-sulfanyl-L-cysteinyl-[cysteine desulfurase] + AH2 = [ThiS sulfur-carrier protein]-C-terminal-Gly-aminoethanethioate + L-cysteinyl-[cysteine desulfurase] + A + AMP + 2 H(+). Its pathway is cofactor biosynthesis; thiamine diphosphate biosynthesis. Catalyzes the ATP-dependent transfer of a sulfur to tRNA to produce 4-thiouridine in position 8 of tRNAs, which functions as a near-UV photosensor. Also catalyzes the transfer of sulfur to the sulfur carrier protein ThiS, forming ThiS-thiocarboxylate. This is a step in the synthesis of thiazole, in the thiamine biosynthesis pathway. The sulfur is donated as persulfide by IscS. This is Probable tRNA sulfurtransferase from Bacillus cereus (strain ATCC 14579 / DSM 31 / CCUG 7414 / JCM 2152 / NBRC 15305 / NCIMB 9373 / NCTC 2599 / NRRL B-3711).